A 324-amino-acid chain; its full sequence is tRNA dimethylallyltransferase (324 aa).

17–24 (GPTASGKT) is an ATP binding site. Residue 19 to 24 (TASGKT) participates in substrate binding. Interaction with substrate tRNA regions lie at residues 42-45 (DSAL), 166-170 (QRIQR), 251-256 (RCVGYR), and 284-291 (KRQITWLR).

It belongs to the IPP transferase family. Monomer. Requires Mg(2+) as cofactor.

It catalyses the reaction adenosine(37) in tRNA + dimethylallyl diphosphate = N(6)-dimethylallyladenosine(37) in tRNA + diphosphate. Functionally, catalyzes the transfer of a dimethylallyl group onto the adenine at position 37 in tRNAs that read codons beginning with uridine, leading to the formation of N6-(dimethylallyl)adenosine (i(6)A). In Burkholderia lata (strain ATCC 17760 / DSM 23089 / LMG 22485 / NCIMB 9086 / R18194 / 383), this protein is tRNA dimethylallyltransferase.